The primary structure comprises 484 residues: Sialidase-4 (484 aa).

The FRIP motif motif lies at 22–25; that stretch reads YRVP. Positions 23 and 43 each coordinate substrate. Active-site proton acceptor residues include Asp47 and Asp48. One copy of the BNR 1 repeat lies at 127 to 138; the sequence is VASRDAGLSWGS. The substrate site is built by Tyr177 and Tyr179. The stretch at 200–211 is one BNR 2 repeat; that stretch reads FYSDDHGRTWRC. Glu222 and Arg242 together coordinate substrate. Residues 251-262 form a BNR 3 repeat; sequence ALSTDEGTSFLP. Residues 284 to 357 form a disordered region; it reads PAPAPNRPRD…GPRPGVSGDV (74 aa). A compositionally biased stretch (low complexity) spans 336–345; it reads RLQPRGDGPR. Arg389 contributes to the substrate binding site. Tyr419 (nucleophile) is an active-site residue. The active site involves Glu440.

This sequence belongs to the glycosyl hydrolase 33 family. Post-translationally, N-glycosylated. As to expression, predominant form in liver. Also expressed in brain, kidney and colon. In terms of tissue distribution, highly expressed in brain and at lower levels in kidney and liver.

The protein localises to the cell membrane. Its subcellular location is the endoplasmic reticulum membrane. The protein resides in the microsome membrane. It localises to the mitochondrion membrane. It is found in the cell projection. The protein localises to the neuron projection. Its subcellular location is the mitochondrion inner membrane. The protein resides in the mitochondrion outer membrane. It localises to the lysosome lumen. It carries out the reaction Hydrolysis of alpha-(2-&gt;3)-, alpha-(2-&gt;6)-, alpha-(2-&gt;8)- glycosidic linkages of terminal sialic acid residues in oligosaccharides, glycoproteins, glycolipids, colominic acid and synthetic substrates.. The enzyme catalyses a ganglioside GM3 + H2O = a beta-D-galactosyl-(1-&gt;4)-beta-D-glucosyl-(1&lt;-&gt;1)-ceramide + N-acetylneuraminate. The catalysed reaction is a ganglioside GM3 (d18:1(4E)) + H2O = a beta-D-Gal-(1-&gt;4)-beta-D-Glc-(1&lt;-&gt;1)-Cer(d18:1(4E)) + N-acetylneuraminate. It catalyses the reaction a ganglioside GM2 + H2O = a ganglioside GA2 + N-acetylneuraminate. It carries out the reaction a ganglioside GM2 (d18:1(4E)) + H2O = a ganglioside GA2 (d18:1(4E)) + N-acetylneuraminate. The enzyme catalyses a ganglioside GD1a + H2O = a ganglioside GM1 + N-acetylneuraminate. The catalysed reaction is a ganglioside GD1a (d18:1(4E)) + H2O = a ganglioside GM1 (d18:1(4E)) + N-acetylneuraminate. It catalyses the reaction a ganglioside GD3 + H2O = a ganglioside GM3 + N-acetylneuraminate. It carries out the reaction a ganglioside GD3 (d18:1(4E)) + H2O = a ganglioside GM3 (d18:1(4E)) + N-acetylneuraminate. Its function is as follows. Exo-alpha-sialidase that catalyzes the hydrolytic cleavage of the terminal sialic acid (N-acetylneuraminic acid, Neu5Ac) of a glycan moiety in the catabolism of glycolipids, glycoproteins and oligosacharides. Efficiently hydrolyzes gangliosides including alpha-(2-&gt;3)-sialylated GD1a and GM3 and alpha-(2-&gt;8)-sialylated GD3. Hydrolyzes poly-alpha-(2-&gt;8)-sialylated neural cell adhesion molecule NCAM1 likely at growth cones, suppressing neurite outgrowth in hippocampal neurons. May desialylate sialyl Lewis A and X antigens at the cell surface, down-regulating these glycan epitopes recognized by SELE/E selectin in the initiation of cell adhesion and extravasation. Has sialidase activity toward mucin, fetuin and sialyllactose. In Homo sapiens (Human), this protein is Sialidase-4 (NEU4).